A 493-amino-acid chain; its full sequence is Transmembrane protein 184 homolog DDB_G0284525 (493 aa).

Over residues 1–10 (MTQESSSSNH) the composition is skewed to polar residues. The disordered stretch occupies residues 1 to 25 (MTQESSSSNHYVDESSFDNNNNNNN). 7 consecutive transmembrane segments (helical) span residues 46 to 66 (VPALYAMFALASLFVLLATIL), 87 to 107 (IVRIVFMIPIYAIYSLLSLLL), 119 to 139 (DCYEAYVLYMFFALCVSYGGG), 180 to 200 (YVLVRPAVTLASAIFEIFGLY), 212 to 232 (FYNAFIINVSVTVALYIVVLF), 254 to 274 (IVVFFCFWQSIAISGMTNFGW), and 293 to 313 (FLICFEMFGVAILHQYAFPYE). N-linked (GlcNAc...) asparagine glycans are attached at residues asparagine 415 and asparagine 416.

This sequence belongs to the TMEM184 family.

Its subcellular location is the cell membrane. Probable transporter. This chain is Transmembrane protein 184 homolog DDB_G0284525 (tmem184A), found in Dictyostelium discoideum (Social amoeba).